The sequence spans 427 residues: Trigger factor (427 aa).

Positions 163–248 (GDTVILDFEG…LHEIKTKEVP (86 aa)) constitute a PPIase FKBP-type domain.

This sequence belongs to the FKBP-type PPIase family. Tig subfamily.

The protein resides in the cytoplasm. The enzyme catalyses [protein]-peptidylproline (omega=180) = [protein]-peptidylproline (omega=0). Its function is as follows. Involved in protein export. Acts as a chaperone by maintaining the newly synthesized protein in an open conformation. Functions as a peptidyl-prolyl cis-trans isomerase. In Listeria innocua serovar 6a (strain ATCC BAA-680 / CLIP 11262), this protein is Trigger factor.